Here is a 232-residue protein sequence, read N- to C-terminus: Flavin-dependent thymidylate synthase (232 aa).

The 204-residue stretch at Met-1 to Gly-204 folds into the ThyX domain. Residues Ser-55, Arg-79 to Arg-81, and Gln-87 each bind FAD. Residues Gln-76 to Arg-79, Gln-87 to Arg-91, and Arg-143 each bind dUMP. Residues Arg-79–Ser-89 carry the ThyX motif motif. FAD-binding positions include Asn-159–Arg-161 and His-165. Residue Arg-170 coordinates dUMP. Arg-170 serves as the catalytic Involved in ionization of N3 of dUMP, leading to its activation.

This sequence belongs to the thymidylate synthase ThyX family. In terms of assembly, homotetramer. FAD is required as a cofactor.

It carries out the reaction dUMP + (6R)-5,10-methylene-5,6,7,8-tetrahydrofolate + NADPH + H(+) = dTMP + (6S)-5,6,7,8-tetrahydrofolate + NADP(+). The protein operates within pyrimidine metabolism; dTTP biosynthesis. In terms of biological role, catalyzes the reductive methylation of 2'-deoxyuridine-5'-monophosphate (dUMP) to 2'-deoxythymidine-5'-monophosphate (dTMP) while utilizing 5,10-methylenetetrahydrofolate (mTHF) as the methyl donor, and NADPH and FADH(2) as the reductant. This is Flavin-dependent thymidylate synthase from Geobacter sulfurreducens (strain ATCC 51573 / DSM 12127 / PCA).